Consider the following 257-residue polypeptide: Taurine import ATP-binding protein TauB (257 aa).

Residues 6-233 (LDKISIHYDG…RYAAGEPIRA (228 aa)) form the ABC transporter domain. 38 to 45 (GRSGCGKT) serves as a coordination point for ATP.

This sequence belongs to the ABC transporter superfamily. Taurine importer (TC 3.A.1.17.1) family. In terms of assembly, the complex is composed of two ATP-binding proteins (TauB), two transmembrane proteins (TauC) and a solute-binding protein (TauA).

The protein resides in the cell inner membrane. The enzyme catalyses taurine(out) + ATP + H2O = taurine(in) + ADP + phosphate + H(+). Functionally, part of the ABC transporter complex TauABC involved in taurine import. Responsible for energy coupling to the transport system. The polypeptide is Taurine import ATP-binding protein TauB (Mesorhizobium japonicum (strain LMG 29417 / CECT 9101 / MAFF 303099) (Mesorhizobium loti (strain MAFF 303099))).